The chain runs to 528 residues: Probable serine/threonine-protein kinase 380R (528 aa).

The disordered stretch occupies residues 70-96 (VKIPKSKSPPKVKSPKRKKSPVRRRVS). Positions 73–95 (PKSKSPPKVKSPKRKKSPVRRRV) are enriched in basic residues. Residues 156–507 (FTNVKAVGKG…LANVLIHKIF (352 aa)) enclose the Protein kinase domain. ATP-binding positions include 162 to 170 (VGKGSFGTV) and Lys187. The active-site Proton acceptor is Asp302.

It belongs to the protein kinase superfamily. Ser/Thr protein kinase family.

It catalyses the reaction L-seryl-[protein] + ATP = O-phospho-L-seryl-[protein] + ADP + H(+). The enzyme catalyses L-threonyl-[protein] + ATP = O-phospho-L-threonyl-[protein] + ADP + H(+). This is Probable serine/threonine-protein kinase 380R from Invertebrate iridescent virus 6 (IIV-6).